The chain runs to 48 residues: GNCKCDDEGPNVRTAPLTGYVDLGYCNEGWEKCASYYSPIAECCRKKK.

3 disulfide bridges follow: Cys3–Cys43, Cys5–Cys33, and Cys26–Cys44.

This sequence belongs to the sea anemone sodium channel inhibitory toxin family. Type II subfamily.

Its subcellular location is the secreted. It localises to the nematocyst. In terms of biological role, binds specifically to voltage-gated sodium channels (Nav), thereby delaying their inactivation during signal transduction. Its toxicity is greater than that of RpII (AC P01534). The protein is Delta-stichotoxin-Hmg4b of Heteractis magnifica (Magnificent sea anemone).